The following is a 100-amino-acid chain: Urease subunit gamma (100 aa).

The protein belongs to the urease gamma subunit family. In terms of assembly, heterotrimer of UreA (gamma), UreB (beta) and UreC (alpha) subunits. Three heterotrimers associate to form the active enzyme.

It localises to the cytoplasm. It carries out the reaction urea + 2 H2O + H(+) = hydrogencarbonate + 2 NH4(+). Its pathway is nitrogen metabolism; urea degradation; CO(2) and NH(3) from urea (urease route): step 1/1. This is Urease subunit gamma from Methylibium petroleiphilum (strain ATCC BAA-1232 / LMG 22953 / PM1).